Here is a 67-residue protein sequence, read N- to C-terminus: Protein AaeX (67 aa).

2 helical membrane-spanning segments follow: residues 3 to 23 (LFPV…ELLL) and 47 to 67 (PALF…RLFV).

Belongs to the AaeX family.

The protein localises to the cell membrane. The protein is Protein AaeX of Escherichia coli O157:H7.